The sequence spans 181 residues: MKTIEVDDELYSYIASHTKHIGESASDILRRMLKFSAASQPAAPVTKEVRVASPAIVEAKPVKTIKDKVRAMRELLLSDEYAEQKRAVNRFMLLLSTLYSLDAQAFAEATESLHGRTRVYFAADEQTLLKNGNQTKPKHVPGTPYWVITNTNTGRKCSMIEHIMQSMQFPAELIEKVCGTI.

3 interaction with DNA regions span residues 87–88 (AV), 116–120 (RTRVY), and 150–156 (NTNTGRK).

It belongs to the SeqA family. As to quaternary structure, homodimer. Polymerizes to form helical filaments.

Its subcellular location is the cytoplasm. Negative regulator of replication initiation, which contributes to regulation of DNA replication and ensures that replication initiation occurs exactly once per chromosome per cell cycle. Binds to pairs of hemimethylated GATC sequences in the oriC region, thus preventing assembly of replication proteins and re-initiation at newly replicated origins. Repression is relieved when the region becomes fully methylated. In Shigella flexneri, this protein is Negative modulator of initiation of replication.